The chain runs to 426 residues: Probable imidazolonepropionase (426 aa).

Positions 159 and 192 each coordinate 4-imidazolone-5-propanoate. Tyrosine 159 is a binding site for N-formimidoyl-L-glutamate. Histidine 260 is a Fe(3+) binding site. Histidine 260 is a binding site for Zn(2+). Glutamate 263 is a binding site for 4-imidazolone-5-propanoate. Aspartate 334 provides a ligand contact to Fe(3+). Aspartate 334 provides a ligand contact to Zn(2+). Asparagine 336 contributes to the N-formimidoyl-L-glutamate binding site.

The protein belongs to the metallo-dependent hydrolases superfamily. HutI family. The cofactor is Zn(2+). Fe(3+) is required as a cofactor.

The enzyme catalyses 4-imidazolone-5-propanoate + H2O = N-formimidoyl-L-glutamate. It functions in the pathway amino-acid degradation; L-histidine degradation into L-glutamate; N-formimidoyl-L-glutamate from L-histidine: step 3/3. The sequence is that of Probable imidazolonepropionase (AMDHD1) from Bos taurus (Bovine).